A 292-amino-acid chain; its full sequence is Protoheme IX farnesyltransferase (292 aa).

9 helical membrane passes run Phe-11–Ile-31, Trp-37–Leu-57, Ala-85–Leu-105, Val-108–Trp-128, Val-133–Val-153, Ser-163–Ile-183, Val-199–Gly-219, Ala-223–Phe-243, and Trp-261–Ile-281.

The protein belongs to the UbiA prenyltransferase family. Protoheme IX farnesyltransferase subfamily.

It localises to the cell inner membrane. It catalyses the reaction heme b + (2E,6E)-farnesyl diphosphate + H2O = Fe(II)-heme o + diphosphate. Its pathway is porphyrin-containing compound metabolism; heme O biosynthesis; heme O from protoheme: step 1/1. Functionally, converts heme B (protoheme IX) to heme O by substitution of the vinyl group on carbon 2 of heme B porphyrin ring with a hydroxyethyl farnesyl side group. The protein is Protoheme IX farnesyltransferase of Bdellovibrio bacteriovorus (strain ATCC 15356 / DSM 50701 / NCIMB 9529 / HD100).